The primary structure comprises 81 residues: Photosystem I iron-sulfur center (81 aa).

4Fe-4S ferredoxin-type domains are found at residues 2-31 and 39-68; these read SHFVKIYDTCIGCTQCVRACPTDVLEMIPW and IASAPRTEDCVGCKRCESACPTDFLSVRVY. Positions 11, 14, 17, 21, 48, 51, 54, and 58 each coordinate [4Fe-4S] cluster.

As to quaternary structure, the eukaryotic PSI reaction center is composed of at least 11 subunits. It depends on [4Fe-4S] cluster as a cofactor.

The protein resides in the plastid thylakoid membrane. It carries out the reaction reduced [plastocyanin] + hnu + oxidized [2Fe-2S]-[ferredoxin] = oxidized [plastocyanin] + reduced [2Fe-2S]-[ferredoxin]. Its function is as follows. Apoprotein for the two 4Fe-4S centers FA and FB of photosystem I (PSI); essential for photochemical activity. FB is the terminal electron acceptor of PSI, donating electrons to ferredoxin. The C-terminus interacts with PsaA/B/D and helps assemble the protein into the PSI complex. Required for binding of PsaD and PsaE to PSI. PSI is a plastocyanin-ferredoxin oxidoreductase, converting photonic excitation into a charge separation, which transfers an electron from the donor P700 chlorophyll pair to the spectroscopically characterized acceptors A0, A1, FX, FA and FB in turn. This chain is Photosystem I iron-sulfur center, found in Cuscuta exaltata (Tall dodder).